Consider the following 137-residue polypeptide: Large ribosomal subunit protein uL16 (137 aa).

It belongs to the universal ribosomal protein uL16 family. In terms of assembly, part of the 50S ribosomal subunit.

Functionally, binds 23S rRNA and is also seen to make contacts with the A and possibly P site tRNAs. This chain is Large ribosomal subunit protein uL16, found in Bartonella tribocorum (strain CIP 105476 / IBS 506).